The primary structure comprises 319 residues: Secreted effector protein sopD2 (319 aa).

Residues 37–44 (WDRFKDCF) carry the Required to target late endocytic compartments motif.

Belongs to the SopD family.

It localises to the secreted. It is found in the host cell membrane. Effector proteins function to alter host cell physiology and promote bacterial survival in host tissues. Contributes to the formation of Salmonella-induced filaments (Sifs) in infected epithelial cells and to replication in macrophages. The sequence is that of Secreted effector protein sopD2 (sopD2) from Salmonella typhimurium (strain LT2 / SGSC1412 / ATCC 700720).